The chain runs to 55 residues: MAKPTTVKIKLVSTADTGFFYVTKKNPRTMTEKMTVRKYDPRARKHVEFKEAKIK.

The protein belongs to the bacterial ribosomal protein bL33 family.

The polypeptide is Large ribosomal subunit protein bL33 (Sphingopyxis alaskensis (strain DSM 13593 / LMG 18877 / RB2256) (Sphingomonas alaskensis)).